The following is a 948-amino-acid chain: MVSRCSCLGVQCLLLSLLLLAAWEVGSGQLHYSVYEEARHGTFVGRIAQDLGLELAELVPRLFRVASKRHGDLLEVNLQNGILFVNSRIDREELCGRSVECSIHLEVIVDRPLQVFHVDVEVKDINDNPPRFSVTEQKLSIPESRLLDSRFPLEGASDADVGENALLTYKLSPNEYFVLDIINKKDKDKFPVLVLRKLLDREENPQLKLLLTATDGGKPEFTGSVSLLILVLDANDNAPIFDRPVYEVKMYENQVNQTLVIRLNASDSDEGINKEMMYSFSSLVPPTIRRKFWINERTGEIKVNDAIDFEDSNTYQIHVDVTDKGNPPMVGHCTVLVELLDENDNSPEVIVTSLSLPVKEDAQVGTVIALISVSDHDSGANGQVTCSLTPHVPFKLVSTYKNYYSLVLDSALDRERVSAYELVVTARDGGSPPLWATASVSVEVADVNDNAPAFAQPEYTVFVKENNPPGYHIFTVSAWDADAQENALVSYSLVERRLGERSLSSYVSVHAQSGKVYALQPLDHEELELLQFQVSARDGGVPPLGSNLTLQVFVLDENDNAPALLASPAGSAGGAVSELVLRSVGAGHVVAKVRAVDADSGYNAWLSYELQSAAVGARIPFRVGLYTGEISTTRALDEADSPRQRLLVLVKDHGEPSLTATATVLVSLVEGSQAPKASSRASVGVAPEVALVDVNVYLIIAICAVSSLLVLTLLLYTALRCSAAPTEGACGPVKPTLVCSSTVGSWSYSQQRRQRVCSGEGLPKADLMAFSPSLPPCPMVDVDGEDQSIGGDHSRKPRQPNPDWRYSASLRAGMHSSVHLEEAGILRAGPGGPDQQWPTVSSATPEPEAGEVSPPVGAGVNSNSWTFKYGPGNPKQSGPGELPDKFIIPGSPAIISIRQEPANSQIDKSDFITFGKKEETKKKKKKKKGNKTQEKKEKGNSTTDNSDQ.

The first 28 residues, 1–28, serve as a signal peptide directing secretion; sequence MVSRCSCLGVQCLLLSLLLLAAWEVGSG. 6 Cadherin domains span residues 29–132, 133–241, 242–349, 350–454, 455–564, and 587–689; these read QLHY…PPRF, SVTE…APIF, DRPV…SPEV, IVTS…APAF, AQPE…APAL, and GHVV…APEV. Residues 29–695 lie on the Extracellular side of the membrane; it reads QLHYSVYEEA…APEVALVDVN (667 aa). N-linked (GlcNAc...) asparagine glycans are attached at residues asparagine 256 and asparagine 264. Asparagine 547 is a glycosylation site (N-linked (GlcNAc...) asparagine). Residues 696 to 716 traverse the membrane as a helical segment; it reads VYLIIAICAVSSLLVLTLLLY. Topologically, residues 717-948 are cytoplasmic; the sequence is TALRCSAAPT…GNSTTDNSDQ (232 aa). 6 PXXP repeats span residues 732–735, 772–775, 797–800, 830–833, 871–874, and 889–892; these read PVKP, PSLP, PRQP, PGGP, PGNP, and PGSP. The 6 X 4 AA repeats of P-X-X-P stretch occupies residues 732–892; sequence PVKPTLVCSS…PDKFIIPGSP (161 aa). Disordered regions lie at residues 783-804 and 827-948; these read DGED…NPDW and RAGP…NSDQ. Basic and acidic residues predominate over residues 907 to 921; the sequence is DKSDFITFGKKEETK.

Its subcellular location is the cell membrane. Potential calcium-dependent cell-adhesion protein. May be involved in the establishment and maintenance of specific neuronal connections in the brain. This chain is Protocadherin alpha-10 (PCDHA10), found in Pan troglodytes (Chimpanzee).